Consider the following 652-residue polypeptide: Inactive leucine-rich repeat receptor-like serine/threonine-protein kinase At1g60630 (652 aa).

Residues Met-1–Ser-23 form the signal peptide. Residues Ser-24 to Ser-256 are Extracellular-facing. LRR repeat units follow at residues Ser-64–Gln-84, Leu-85–Leu-108, Val-109–Leu-132, Arg-134–Leu-156, Arg-158–Gln-178, and Ala-179–Arg-203. Asn-72, Asn-104, and Asn-120 each carry an N-linked (GlcNAc...) asparagine glycan. N-linked (GlcNAc...) asparagine glycosylation is found at Asn-185, Asn-205, and Asn-225. The helical transmembrane segment at Gly-257–Trp-277 threads the bilayer. Topologically, residues Arg-278–Ile-652 are cytoplasmic. The disordered stretch occupies residues Arg-286 to Lys-321. The 275-residue stretch at Lys-350–Leu-624 folds into the Protein kinase domain. Ser-352 bears the Phosphoserine mark. ATP contacts are provided by residues Leu-356 to Thr-364 and Lys-378. 2 positions are modified to phosphoserine: Ser-430 and Ser-433. Thr-509 is modified (phosphothreonine). Residues Ser-630–Ile-652 form a disordered region.

It belongs to the protein kinase superfamily. Ser/Thr protein kinase family.

Its subcellular location is the cell membrane. This Arabidopsis thaliana (Mouse-ear cress) protein is Inactive leucine-rich repeat receptor-like serine/threonine-protein kinase At1g60630.